The primary structure comprises 398 residues: Succinate--CoA ligase [ADP-forming] subunit beta (398 aa).

Residues 9–250 (KQLFARYGVP…VDEEDPVELQ (242 aa)) form the ATP-grasp domain. ATP is bound by residues Lys-50, 57–59 (GRG), Glu-104, Leu-107, and Glu-112. Residues Asn-205 and Asp-219 each contribute to the Mg(2+) site. Substrate is bound by residues Asn-270 and 327–329 (GIM).

This sequence belongs to the succinate/malate CoA ligase beta subunit family. Heterotetramer of two alpha and two beta subunits. The cofactor is Mg(2+).

The enzyme catalyses succinate + ATP + CoA = succinyl-CoA + ADP + phosphate. It catalyses the reaction GTP + succinate + CoA = succinyl-CoA + GDP + phosphate. Its pathway is carbohydrate metabolism; tricarboxylic acid cycle; succinate from succinyl-CoA (ligase route): step 1/1. In terms of biological role, succinyl-CoA synthetase functions in the citric acid cycle (TCA), coupling the hydrolysis of succinyl-CoA to the synthesis of either ATP or GTP and thus represents the only step of substrate-level phosphorylation in the TCA. The beta subunit provides nucleotide specificity of the enzyme and binds the substrate succinate, while the binding sites for coenzyme A and phosphate are found in the alpha subunit. This is Succinate--CoA ligase [ADP-forming] subunit beta from Sorangium cellulosum (strain So ce56) (Polyangium cellulosum (strain So ce56)).